A 491-amino-acid polypeptide reads, in one-letter code: Probable glycine dehydrogenase (decarboxylating) subunit 2 (491 aa).

Position 273 is an N6-(pyridoxal phosphate)lysine (lysine 273).

This sequence belongs to the GcvP family. C-terminal subunit subfamily. In terms of assembly, the glycine cleavage system is composed of four proteins: P, T, L and H. In this organism, the P 'protein' is a heterodimer of two subunits. Pyridoxal 5'-phosphate is required as a cofactor.

The catalysed reaction is N(6)-[(R)-lipoyl]-L-lysyl-[glycine-cleavage complex H protein] + glycine + H(+) = N(6)-[(R)-S(8)-aminomethyldihydrolipoyl]-L-lysyl-[glycine-cleavage complex H protein] + CO2. In terms of biological role, the glycine cleavage system catalyzes the degradation of glycine. The P protein binds the alpha-amino group of glycine through its pyridoxal phosphate cofactor; CO(2) is released and the remaining methylamine moiety is then transferred to the lipoamide cofactor of the H protein. This Bacillus velezensis (strain DSM 23117 / BGSC 10A6 / LMG 26770 / FZB42) (Bacillus amyloliquefaciens subsp. plantarum) protein is Probable glycine dehydrogenase (decarboxylating) subunit 2.